The chain runs to 305 residues: Suppressor of activated egl-4 protein 2 (305 aa).

The tract at residues 138–168 (KRGYESDSSDVSGVSHCSDAKRRRGRPRKDE) is disordered. Positions 158–170 (KRRRGRPRKDEEA) form a DNA-binding region, a.T hook.

As to quaternary structure, interacts with phosphorylated egl-4. May interact with itself. May be a component of a histone deacetylase complex containing saeg-2, saeg-1 and hda-2. As to expression, ubiquitously expressed.

Its subcellular location is the nucleus. Its function is as follows. As a likely component of a histone deacetylase complex, together with saeg-1 and hda-2, functions downstream of the cAMP-dependent kinase egl-4 to regulate the expression of genes required for egg-laying and foraging. The sequence is that of Suppressor of activated egl-4 protein 2 from Caenorhabditis elegans.